We begin with the raw amino-acid sequence, 138 residues long: Translation initiation factor 2 subunit beta (138 aa).

The protein belongs to the eIF-2-beta/eIF-5 family. Heterotrimer composed of an alpha, a beta and a gamma chain.

Its function is as follows. eIF-2 functions in the early steps of protein synthesis by forming a ternary complex with GTP and initiator tRNA. This Methanococcus vannielii (strain ATCC 35089 / DSM 1224 / JCM 13029 / OCM 148 / SB) protein is Translation initiation factor 2 subunit beta.